A 360-amino-acid chain; its full sequence is MGNIMTCCVCPRASPELDQHQGSVCPCGSEIYKAAAGDMIAGVPVAAAVEPGEVTFEAGEGLHVHHICEREMPEDIPLESNSSDHPKASTIFLRKSQTDVQEKRKSNYTKHVSTERFTQQYSSCSTIFLDDSTASQPHLTMTLKSVTLAIYYHIKQRDADRSLGIFDERLHPLTREEVLEEYFKYDPEHKFIFRFVRTLFKAIRLTAEFAIVSLIYIERLVSYADIDICPTNWKRIVLGAILLASKVWSDMAVWNEDYCKLFENITVEEMNELERQFLKLINYNIGVTGSVYSRFYFDLRSLAHDNGLYSPVYLLDRERAWKLEAFSRMEQYKVFYSAAKNGSLSAEDLIHLQRAKAILF.

The Cyclin N-terminal domain maps to 204–286; sequence RLTAEFAIVS…FLKLINYNIG (83 aa).

Belongs to the cyclin family. Cyclin Y subfamily.

The sequence is that of Cyclin-Y-like protein 2 (CCNYL2) from Macaca fascicularis (Crab-eating macaque).